The sequence spans 130 residues: Large ribosomal subunit protein bL21 (130 aa).

The tract at residues 110–130 (TAPTATEETADATPDTETAAE) is disordered.

This sequence belongs to the bacterial ribosomal protein bL21 family. In terms of assembly, part of the 50S ribosomal subunit. Contacts protein L20.

Its function is as follows. This protein binds to 23S rRNA in the presence of protein L20. In Nostoc sp. (strain PCC 7120 / SAG 25.82 / UTEX 2576), this protein is Large ribosomal subunit protein bL21.